An 812-amino-acid chain; its full sequence is MRVPSLSVLSFLLGTALAAASNFEAGLLSSGKVSLGDWKSAHEKASQFVAKLNTTEKIKLITGSSVTTTNGETFTALDILDGDMGAQAYYYVSAFSLSSALAMTWDKEAMYEQGRAIAAEFYGKGIQMVAGPTSQPLGRTPWGGRLVESFGPDPYLNGIATGLETRAYADVGVIAGAKHFILNEQETNRTGGMGGGGGAPGGGGMGRGAEFSSSVPGGMSPTSSAGAIPSSTSTPGGSGMGGGMAGSSAFSSSSSSGAPYSSNADDKTLHETYLWSFYDAVHSGLGGVMCAMTKVNGTLSCQSSSLLLDILKTELGFPGMVWPDTNGQQDALASAANGLDYGSSSLWSESTIEGYLESNNITEARLNDMAIRNLMGYYYVNLDNGTQPSTAAQDDYVDVRANHAKLIRSHGSKSMVLLKNKNNTLPLYKPHKMAIFGSHARAAVAGPNMQFSVEGSGPTYDGHIATDSGSGQASLPYLITPENALNIKASQDGTMLRWIANDTYSSSTGSALVMQGSSSTSVTPSVSAYSENMDVCLVFINALAGEGADRTELRNTDQDNLINEVADNCDNTVVVINTVGARILDSWIEHENVTAVLYGSLLGQESGNSIVDVLYGDVNPSGRLTYTIAKTESDYNVDICYTAQCNFTEGNYIDYRYFDAYNVTPRYEFGYGLSYTDFAYSNLHIQGPSALSTYPTGQLAVGGYEDLWDTVAKVTVTIRNAGSLDGAEVPQLYISYPDVAKQPVRQLRGFHNVYIKKGQSTKVTFELRRRDISYWDVQHQKWAVAPGTYEAWVGASSRDLRTHGSFVVKTKA.

The N-terminal stretch at 1–18 (MRVPSLSVLSFLLGTALA) is a signal peptide. Asn-53 and Asn-188 each carry an N-linked (GlcNAc...) asparagine glycan. A disordered region spans residues 186 to 248 (ETNRTGGMGG…GMGGGMAGSS (63 aa)). Over residues 191–207 (GGMGGGGGAPGGGGMGR) the composition is skewed to gly residues. The span at 211-225 (FSSSVPGGMSPTSSA) shows a compositional bias: polar residues. Over residues 236 to 245 (GGSGMGGGMA) the composition is skewed to gly residues. An N-linked (GlcNAc...) asparagine glycan is attached at Asn-296. Residue Asp-324 is part of the active site. N-linked (GlcNAc...) asparagine glycans are attached at residues Asn-360, Asn-384, Asn-422, Asn-501, Asn-592, and Asn-646.

Belongs to the glycosyl hydrolase 3 family.

The protein resides in the secreted. It catalyses the reaction Hydrolysis of terminal, non-reducing beta-D-glucosyl residues with release of beta-D-glucose.. It functions in the pathway glycan metabolism; cellulose degradation. Beta-glucosidases are one of a number of cellulolytic enzymes involved in the degradation of cellulosic biomass. Catalyzes the last step releasing glucose from the inhibitory cellobiose. The polypeptide is Probable beta-glucosidase D (bglD) (Emericella nidulans (strain FGSC A4 / ATCC 38163 / CBS 112.46 / NRRL 194 / M139) (Aspergillus nidulans)).